The following is a 375-amino-acid chain: Probable 1-acyl-sn-glycerol-3-phosphate acyltransferase 5 (375 aa).

Helical transmembrane passes span 21 to 41 and 57 to 77; these read IICLMVLVSTAFMMLIFWGFL and CVSFFFGSWLALWPFLFEKIN. The HXXXXD motif motif lies at 100 to 105; the sequence is HRTEVD. 2 helical membrane passes run 312–332 and 337–357; these read YLINCLAVIAFTTICTHLTFF and WFRIYVSLACVYLTSATHFNL.

It belongs to the 1-acyl-sn-glycerol-3-phosphate acyltransferase family. As to expression, widely expressed at low level.

The protein resides in the membrane. The catalysed reaction is a 1-acyl-sn-glycero-3-phosphate + an acyl-CoA = a 1,2-diacyl-sn-glycero-3-phosphate + CoA. It participates in phospholipid metabolism; CDP-diacylglycerol biosynthesis; CDP-diacylglycerol from sn-glycerol 3-phosphate: step 2/3. In terms of biological role, may convert lysophosphatidic acid (LPA) into phosphatidic acid by incorporating acyl moiety at the 2 position. Has no activity when expressed in bacteria or yeast. The polypeptide is Probable 1-acyl-sn-glycerol-3-phosphate acyltransferase 5 (LPAT5) (Arabidopsis thaliana (Mouse-ear cress)).